A 268-amino-acid polypeptide reads, in one-letter code: Tryptophan synthase alpha chain (268 aa).

Catalysis depends on proton acceptor residues Glu49 and Asp60.

This sequence belongs to the TrpA family. As to quaternary structure, tetramer of two alpha and two beta chains.

It carries out the reaction (1S,2R)-1-C-(indol-3-yl)glycerol 3-phosphate + L-serine = D-glyceraldehyde 3-phosphate + L-tryptophan + H2O. It participates in amino-acid biosynthesis; L-tryptophan biosynthesis; L-tryptophan from chorismate: step 5/5. Its function is as follows. The alpha subunit is responsible for the aldol cleavage of indoleglycerol phosphate to indole and glyceraldehyde 3-phosphate. This chain is Tryptophan synthase alpha chain, found in Aeromonas salmonicida (strain A449).